A 93-amino-acid chain; its full sequence is Defensin-like protein 229 (93 aa).

The first 19 residues, 1-19 (MKSTTLFMVSCVLIFCVLS), serve as a signal peptide directing secretion. 4 disulfides stabilise this stretch: Cys38/Cys93, Cys48/Cys72, Cys56/Cys84, and Cys70/Cys86.

It belongs to the DEFL family. In terms of tissue distribution, flower buds.

The protein resides in the secreted. The protein is Defensin-like protein 229 (SCRL27) of Arabidopsis thaliana (Mouse-ear cress).